The sequence spans 333 residues: Fructose-1,6-bisphosphatase class 1 (333 aa).

Mg(2+) is bound by residues glutamate 92, aspartate 113, leucine 115, and aspartate 116. Substrate contacts are provided by residues 116-119 (DGSS), asparagine 209, tyrosine 242, and lysine 272. Glutamate 278 serves as a coordination point for Mg(2+).

The protein belongs to the FBPase class 1 family. In terms of assembly, homotetramer. Mg(2+) is required as a cofactor.

Its subcellular location is the cytoplasm. It carries out the reaction beta-D-fructose 1,6-bisphosphate + H2O = beta-D-fructose 6-phosphate + phosphate. It functions in the pathway carbohydrate biosynthesis; Calvin cycle. This chain is Fructose-1,6-bisphosphatase class 1, found in Chlorobium luteolum (strain DSM 273 / BCRC 81028 / 2530) (Pelodictyon luteolum).